We begin with the raw amino-acid sequence, 647 residues long: Denticleless protein homolog (647 aa).

WD repeat units lie at residues Ala-48 to Ser-88, Ala-95 to Thr-134, Gly-137 to Phe-177, Asp-209 to His-248, Thr-264 to Val-303, Gly-308 to Met-349, and Gly-353 to Asn-393. 2 short sequence motifs (DDB1-binding motif) span residues Trp-167 to Arg-170 and Trp-238 to Arg-241. Disordered regions lie at residues Gln-410 to Pro-487 and Lys-534 to Asp-647. Polar residues-rich tracts occupy residues Pro-426 to Pro-443 and Lys-471 to Ser-486. The span at Leu-543 to Gly-558 shows a compositional bias: basic and acidic residues. Residues Lys-586 to Gln-600 show a composition bias toward low complexity.

Belongs to the WD repeat cdt2 family. In terms of assembly, component of the DCX(DTL) E3 ubiquitin ligase complex, at least composed of cul4 (cul4a or cul4b), ddb1, dtl/cdt2 and rbx1.

Its subcellular location is the nucleus. It is found in the cytoplasm. The protein localises to the cytoskeleton. It localises to the microtubule organizing center. The protein resides in the centrosome. Its subcellular location is the chromosome. The protein operates within protein modification; protein ubiquitination. Its function is as follows. Substrate-specific adapter of a DCX (DDB1-CUL4-X-box) E3 ubiquitin-protein ligase complex required for cell cycle control, DNA damage response and translesion DNA synthesis. The DCX(DTL) complex, also named CRL4(CDT2) complex, mediates the polyubiquitination and subsequent degradation of CDT1, CDKN1A/p21(CIP1), KMT5A and SDE2. CDT1 degradation in response to DNA damage is necessary to ensure proper cell cycle regulation of DNA replication. CDKN1A/p21(CIP1) degradation during S phase or following UV irradiation is essential to control replication licensing. KMT5A degradation is also important for a proper regulation of mechanisms such as TGF-beta signaling, cell cycle progression, DNA repair and cell migration. Most substrates require their interaction with PCNA for their polyubiquitination: substrates interact with PCNA via their PIP-box, and those containing the 'K+4' motif in the PIP box, recruit the DCX(DTL) complex, leading to their degradation. In undamaged proliferating cells, the DCX(DTL) complex also promotes the 'Lys-164' monoubiquitination of PCNA, thereby being involved in PCNA-dependent translesion DNA synthesis. May play a role in the regulation of the circadian clock. This chain is Denticleless protein homolog (dtl), found in Danio rerio (Zebrafish).